The sequence spans 191 residues: Small ribosomal subunit protein uS5 (191 aa).

One can recognise an S5 DRBM domain in the interval 21-84 (LVDKLVTINR…ERAKRTMIRV (64 aa)). The interval 161–191 (PRHVASRRGKKAAELFGKREQGQTEAEVTNG) is disordered. Residues 171–182 (KAAELFGKREQG) are compositionally biased toward basic and acidic residues.

The protein belongs to the universal ribosomal protein uS5 family. As to quaternary structure, part of the 30S ribosomal subunit. Contacts proteins S4 and S8.

Its function is as follows. With S4 and S12 plays an important role in translational accuracy. Functionally, located at the back of the 30S subunit body where it stabilizes the conformation of the head with respect to the body. The protein is Small ribosomal subunit protein uS5 of Gluconobacter oxydans (strain 621H) (Gluconobacter suboxydans).